The following is a 219-amino-acid chain: UPF0073 inner membrane protein YqfA (219 aa).

At 1 to 23 (MVQKPLIKQGYSLAEEIANSVSH) the chain is on the cytoplasmic side. A helical transmembrane segment spans residues 24–44 (GIGLVFGIVGLVLLLVQAVDL). Residues 45 to 53 (NASATAITS) lie on the Periplasmic side of the membrane. The helical transmembrane segment at 54–74 (YSLYGGSMILLFLASTLYHAI) threads the bilayer. The Cytoplasmic portion of the chain corresponds to 75 to 90 (PHQRAKMWLKKFDHCA). Residues 91–111 (IYLLIAGTYTPFLLVGLDSPL) traverse the membrane as a helical segment. Residues 112 to 113 (AR) are Periplasmic-facing. The helical transmembrane segment at 114–134 (GLMIVIWSLALLGILFKLTIA) threads the bilayer. Topologically, residues 135 to 138 (HRFK) are cytoplasmic. A helical membrane pass occupies residues 139–159 (ILSLVTYLAMGWLSLVVIYEM). The Periplasmic portion of the chain corresponds to 160–165 (AVKLAA). A helical transmembrane segment spans residues 166–186 (GSVTLLAVGGVVYSLGVIFYV). The Cytoplasmic portion of the chain corresponds to 187 to 195 (CKRIPYNHA). Residues 196–216 (IWHGFVLGGSVCHFLAIYLYI) form a helical membrane-spanning segment. At 217–219 (GQA) the chain is on the periplasmic side.

This sequence belongs to the UPF0073 (Hly-III) family.

It is found in the cell inner membrane. This Escherichia coli O157:H7 protein is UPF0073 inner membrane protein YqfA (yqfA).